A 540-amino-acid polypeptide reads, in one-letter code: Zinc metalloproteinase nas-10 (540 aa).

In terms of domain architecture, Peptidase M12A spans 293–500 (ASIFFEQNLI…VEILNKMYCK (208 aa)). Intrachain disulfides connect Cys-339/Cys-499, Cys-365/Cys-385, Cys-504/Cys-540, Cys-511/Cys-533, and Cys-520/Cys-537. A Zn(2+)-binding site is contributed by His-394. Glu-395 is an active-site residue. His-398 and His-404 together coordinate Zn(2+). The 37-residue stretch at 504–540 (CDDKNVYCGAWALQDLCNNPNHNVWMRSNCRKSCNFC) folds into the ShKT domain.

Requires Zn(2+) as cofactor.

Metalloprotease. The polypeptide is Zinc metalloproteinase nas-10 (Caenorhabditis elegans).